We begin with the raw amino-acid sequence, 224 residues long: Orotate phosphoribosyltransferase (224 aa).

5-phospho-alpha-D-ribose 1-diphosphate-binding positions include K26, 73-74 (YK), R100, K101, K104, H106, and 127-135 (EDVTTSGKS). Orotate contacts are provided by T131 and R160.

It belongs to the purine/pyrimidine phosphoribosyltransferase family. PyrE subfamily. Homodimer. The cofactor is Mg(2+).

The catalysed reaction is orotidine 5'-phosphate + diphosphate = orotate + 5-phospho-alpha-D-ribose 1-diphosphate. It functions in the pathway pyrimidine metabolism; UMP biosynthesis via de novo pathway; UMP from orotate: step 1/2. In terms of biological role, catalyzes the transfer of a ribosyl phosphate group from 5-phosphoribose 1-diphosphate to orotate, leading to the formation of orotidine monophosphate (OMP). This chain is Orotate phosphoribosyltransferase, found in Clostridium botulinum (strain Alaska E43 / Type E3).